The sequence spans 157 residues: Ubiquitin-like protein 4A (157 aa).

A Ubiquitin-like domain is found at 1-76 (MQLTVKALQG…LNLVVKPLEK (76 aa)). Residue lysine 48 forms a Glycyl lysine isopeptide (Lys-Gly) (interchain with G-Cter in ubiquitin) linkage. Serine 90 bears the Phosphoserine mark. Residues 96-138 (WQLISKVLARHFSAADASRVLEQPQRDYERSLSRLTLDDIERL) are required and sufficient for interaction with BAG6.

Component of the BAG6/BAT3 complex, at least composed of BAG6, UBL4A and GET4/TRC35. Interacts with BAG6; the interaction is direct and required for UBL4A protein stability. Interacts with USP13; may be indirect via BAG6. Post-translationally, polyubiquitinated. Ubiquitination by AMFR and deubiquitination by USP13 may regulate the interaction between the BAG6/BAT complex and SGTA and therefore may regulate client proteins fate.

The protein resides in the cytoplasm. Its subcellular location is the cytosol. The protein localises to the nucleus. In terms of biological role, as part of a cytosolic protein quality control complex, the BAG6/BAT3 complex, maintains misfolded and hydrophobic patches-containing proteins in a soluble state and participates in their proper delivery to the endoplasmic reticulum or alternatively can promote their sorting to the proteasome where they undergo degradation. The BAG6/BAT3 complex is involved in the post-translational delivery of tail-anchored/type II transmembrane proteins to the endoplasmic reticulum membrane. Recruited to ribosomes, it interacts with the transmembrane region of newly synthesized tail-anchored proteins and together with SGTA and ASNA1 mediates their delivery to the endoplasmic reticulum. Client proteins that cannot be properly delivered to the endoplasmic reticulum are ubiquitinated and sorted to the proteasome. Similarly, the BAG6/BAT3 complex also functions as a sorting platform for proteins of the secretory pathway that are mislocalized to the cytosol either delivering them to the proteasome for degradation or to the endoplasmic reticulum. The BAG6/BAT3 complex also plays a role in the endoplasmic reticulum-associated degradation (ERAD), a quality control mechanism that eliminates unwanted proteins of the endoplasmic reticulum through their retrotranslocation to the cytosol and their targeting to the proteasome. It maintains these retrotranslocated proteins in an unfolded yet soluble state condition in the cytosol to ensure their proper delivery to the proteasome. The polypeptide is Ubiquitin-like protein 4A (UBL4A) (Pongo abelii (Sumatran orangutan)).